The primary structure comprises 1135 residues: Envelopment polyprotein (1135 aa).

The signal sequence occupies residues 1 to 35 (MRILKLLELVVKVSLFTIALSSVLLAFLIFRATDA). The Lumenal segment spans residues 36–314 (KVEIIRGDHP…KYSKSIYKQT (279 aa)). The short motif at 41–43 (RGD) is the Cell attachment site element. 2 disulfides stabilise this stretch: cysteine 114–cysteine 145 and cysteine 122–cysteine 156. Residue asparagine 116 is glycosylated (N-linked (GlcNAc...) asparagine; by host). The interval 177 to 195 (LDNKRHFSVGTKFFISESL) is non-covalent dimerization. N-linked (GlcNAc...) asparagine; by host glycosylation occurs at asparagine 210. A disulfide bridge connects residues cysteine 224 and cysteine 285. Residues 315–366 (ACINFSWIRLILIALLIYFPIRWLVNKTTKPLFLWYDLIGLITYPILLLINC) form a helical membrane-spanning segment. Over 367-484 (LWKYFPFKCS…VPGCPFLVTS (118 aa)) the chain is Cytoplasmic. Residues 437 to 484 (LSFSLLKFVTEILIGLIILSQMPMSMAQTTQCLSGCFYVPGCPFLVTS) form a signal for signal peptide peptidase region. Topologically, residues 485 to 1067 (KFEKCPERDQ…YFGSFFDTIR (583 aa)) are lumenal. N-linked (GlcNAc...) asparagine; by host glycosylation is found at asparagine 588, asparagine 605, and asparagine 980. A helical transmembrane segment spans residues 1068–1088 (VILLIAFIFLVIYFCSILTTI). Topologically, residues 1089–1135 (CKGYVKNESYKSRSKIEDDDDSEIKAPMLMKDTMTRRRPPMDFSHLV) are cytoplasmic.

The protein belongs to the tospovirus envelope glycoprotein family. In terms of assembly, homodimer; disulfide-linked. Heterodimer with Glycoprotein C. Interacts with nucleoprotein. Heterodimer with Glycoprotein N. Interacts with nucleoprotein. In terms of processing, specific enzymatic cleavages in vivo yield mature proteins including Glycoprotein N and Glycoprotein C. Post-translationally, glycosylated with O-linked glycans. Glycosylation is essential for proper subcellular location. Cleaved at acidic pH.

The protein resides in the virion membrane. It is found in the host Golgi apparatus membrane. It localises to the host endoplasmic reticulum membrane. Functionally, forms the spikes present at the surface of the virion together with Glycoprotein C. They are able to attach the virion to a cell receptor and to promote fusion of membranes after endocytosis of the virion. Plays a role in virus binding and/or entry into the vector midgut. Forms the spikes present at the surface of the virion together with Glycoprotein N. They are able to attach the virion to a cell receptor and to promote fusion of membranes after endocytosis of the virion. Probable class II fusion protein. The polypeptide is Envelopment polyprotein (GP) (Tomato spotted wilt virus (strain Regular2A) (TSWV)).